The primary structure comprises 249 residues: Probable septum site-determining protein MinC (249 aa).

Residues 116–149 (AAVSPPPPPPPPPARAEPAAPVARPAPGRMQRNA) are disordered. Positions 119–130 (SPPPPPPPPPAR) are enriched in pro residues. Residues 131–142 (AEPAAPVARPAP) show a composition bias toward low complexity.

It belongs to the MinC family. As to quaternary structure, interacts with MinD and FtsZ.

Cell division inhibitor that blocks the formation of polar Z ring septums. Rapidly oscillates between the poles of the cell to destabilize FtsZ filaments that have formed before they mature into polar Z rings. Prevents FtsZ polymerization. In Xanthomonas campestris pv. campestris (strain B100), this protein is Probable septum site-determining protein MinC.